Reading from the N-terminus, the 121-residue chain is UPF0145 protein SAV_4658 (121 aa).

Belongs to the UPF0145 family.

In Streptomyces avermitilis (strain ATCC 31267 / DSM 46492 / JCM 5070 / NBRC 14893 / NCIMB 12804 / NRRL 8165 / MA-4680), this protein is UPF0145 protein SAV_4658.